Here is a 78-residue protein sequence, read N- to C-terminus: ATP synthase subunit c (78 aa).

The next 2 membrane-spanning stretches (helical) occupy residues 11–31 and 53–73; these read FIGA…VGHV and LFIG…VALL.

Belongs to the ATPase C chain family. As to quaternary structure, F-type ATPases have 2 components, F(1) - the catalytic core - and F(0) - the membrane proton channel. F(1) has five subunits: alpha(3), beta(3), gamma(1), delta(1), epsilon(1). F(0) has four main subunits: a(1), b(1), b'(1) and c(10-14). The alpha and beta chains form an alternating ring which encloses part of the gamma chain. F(1) is attached to F(0) by a central stalk formed by the gamma and epsilon chains, while a peripheral stalk is formed by the delta, b and b' chains.

Its subcellular location is the cell inner membrane. In terms of biological role, f(1)F(0) ATP synthase produces ATP from ADP in the presence of a proton or sodium gradient. F-type ATPases consist of two structural domains, F(1) containing the extramembraneous catalytic core and F(0) containing the membrane proton channel, linked together by a central stalk and a peripheral stalk. During catalysis, ATP synthesis in the catalytic domain of F(1) is coupled via a rotary mechanism of the central stalk subunits to proton translocation. Functionally, key component of the F(0) channel; it plays a direct role in translocation across the membrane. A homomeric c-ring of between 10-14 subunits forms the central stalk rotor element with the F(1) delta and epsilon subunits. The chain is ATP synthase subunit c from Jannaschia sp. (strain CCS1).